Consider the following 295-residue polypeptide: MELIQDTSRPPLEYVKGVPLIKYFAEALGPLQSFQARPDDLLINTYPKSGTTWVSQILDMIYQGGDLEKCNRAPIYVRVPFLEVNDPGEPSGLETLKDTPPPRLIKSHLPLALLPQTLLDQKVKVVYVARNPKDVAVSYYHFHRMEKAHPEPGTWDSFLEKFMAGEVSYGSWYQHVQEWWELSRTHPVLYLFYEDMKENPKREIQKILEFVGRSLPEETMDFMVQHTSFKEMKKNPMTNYTTVPQELMDHSISPFMRKGMAGDWKTTFTVAQNERFDADYAEKMAGCSLSFRSEL.

Lysine 48–tryptophan 53 contributes to the 3'-phosphoadenylyl sulfate binding site. Residues aspartate 86 and lysine 106–histidine 108 each bind dopamine. Histidine 108 functions as the Proton acceptor in the catalytic mechanism. 3'-phosphoadenylyl sulfate contacts are provided by arginine 130 and serine 138. Glutamate 146 provides a ligand contact to dopamine. Residues tyrosine 193, threonine 227–methionine 232, and arginine 257–glycine 259 each bind 3'-phosphoadenylyl sulfate.

Belongs to the sulfotransferase 1 family. In terms of assembly, homodimer. Post-translationally, the N-terminus is blocked. Liver, colon, kidney, lung, brain, spleen, small intestine, placenta and leukocyte.

The protein localises to the cytoplasm. It carries out the reaction a phenol + 3'-phosphoadenylyl sulfate = an aryl sulfate + adenosine 3',5'-bisphosphate + H(+). The enzyme catalyses 4-nitrophenol + 3'-phosphoadenylyl sulfate = 4-nitrophenyl sulfate + adenosine 3',5'-bisphosphate. The catalysed reaction is dopamine + 3'-phosphoadenylyl sulfate = dopamine 3-O-sulfate + adenosine 3',5'-bisphosphate + H(+). It catalyses the reaction dopamine + 3'-phosphoadenylyl sulfate = dopamine 4-O-sulfate + adenosine 3',5'-bisphosphate + H(+). It carries out the reaction serotonin + 3'-phosphoadenylyl sulfate = serotonin O-sulfate + adenosine 3',5'-bisphosphate + H(+). The enzyme catalyses (R)-adrenaline + 3'-phosphoadenylyl sulfate = (R)-adrenaline 4'-O-sulfate + adenosine 3',5'-bisphosphate + H(+). The catalysed reaction is (R)-noradrenaline + 3'-phosphoadenylyl sulfate = (R)-noradrenaline 4'-O-sulfate + adenosine 3',5'-bisphosphate + H(+). It catalyses the reaction 3,3',5-triiodo-L-thyronine + 3'-phosphoadenylyl sulfate = 3,3',5-triiodo-L-thyronine sulfate + adenosine 3',5'-bisphosphate + H(+). It carries out the reaction 3,3',5'-triiodo-L-thyronine + 3'-phosphoadenylyl sulfate = 3,3',5'-triiodo-L-thyronine sulfate + adenosine 3',5'-bisphosphate + H(+). The enzyme catalyses 3,3'-diiodo-L-thyronine + 3'-phosphoadenylyl sulfate = 3,3'-diiodo-L-thyronine sulfate + adenosine 3',5'-bisphosphate + H(+). The catalysed reaction is L-thyroxine + 3'-phosphoadenylyl sulfate = L-thyroxine sulfate + adenosine 3',5'-bisphosphate + H(+). Functionally, sulfotransferase that utilizes 3'-phospho-5'-adenylyl sulfate (PAPS) as sulfonate donor to catalyze the sulfate conjugation of phenolic monoamines (neurotransmitters such as dopamine, (R)-adrenaline/epinephrine, (R)-noradrenaline/norepinephrine and serotonin) and phenolic and catechol drugs. Catalyzes the sulfation of T4 (L-thyroxine/3,5,3',5'-tetraiodothyronine), T3 (3,5,3'-triiodothyronine), rT3 (3,3',5'-triiodothyronine) and 3,3'-T2 (3,3'-diiodothyronine), with a substrate preference of 3,3'-T2 &gt; rT3 &gt; T3 &gt; T4. The sequence is that of Sulfotransferase 1A3 (SULT1A3) from Homo sapiens (Human).